The following is a 332-amino-acid chain: Biotin synthase (332 aa).

In terms of domain architecture, Radical SAM core spans 53 to 283 (WGKGGVHACS…VHPRKTIKFA (231 aa)). Positions 71, 75, and 78 each coordinate [4Fe-4S] cluster. The [2Fe-2S] cluster site is built by Cys-150, Cys-211, and Lys-281.

Belongs to the radical SAM superfamily. Biotin synthase family. As to quaternary structure, homodimer. Requires [4Fe-4S] cluster as cofactor. [2Fe-2S] cluster is required as a cofactor.

The catalysed reaction is (4R,5S)-dethiobiotin + (sulfur carrier)-SH + 2 reduced [2Fe-2S]-[ferredoxin] + 2 S-adenosyl-L-methionine = (sulfur carrier)-H + biotin + 2 5'-deoxyadenosine + 2 L-methionine + 2 oxidized [2Fe-2S]-[ferredoxin]. It participates in cofactor biosynthesis; biotin biosynthesis; biotin from 7,8-diaminononanoate: step 2/2. Catalyzes the conversion of dethiobiotin (DTB) to biotin by the insertion of a sulfur atom into dethiobiotin via a radical-based mechanism. The sequence is that of Biotin synthase from Chlorobium luteolum (strain DSM 273 / BCRC 81028 / 2530) (Pelodictyon luteolum).